The following is a 744-amino-acid chain: Junctophilin-3 (744 aa).

Residues 1 to 723 lie on the Cytoplasmic side of the membrane; it reads MSSGGRFNFD…LKSSTGSAPI (723 aa). MORN repeat units lie at residues 15-37, 39-60, 61-82, 83-105, 107-129, and 130-152; these read YCGGWEDGKAHGHGVCTGPKGQG, YTGSWSHGFEVLGVYTWPSGNT, YQGTWAQGKRHGIGLESKGKWV, YKGEWTHGFKGRYGVRECTGNGA, YEGTWSNGLQDGYGTETYSDGGT, and YQGQWVGGMRQGYGVRQSVPYGM. Residues 230–252 are disordered; that stretch reads SKSSLASQRSKQSSFRSEAGMST. A compositionally biased stretch (low complexity) spans 231-244; that stretch reads KSSLASQRSKQSSF. MORN repeat units follow at residues 288–310 and 311–333; these read YVGEWKNDKRSGFGVSQRSDGLK and YEGEWVSNRRHGYGCMTFPDGTK. S440 bears the Phosphoserine mark. Phosphothreonine is present on T451. Disordered regions lie at residues 451-603 and 624-677; these read TPLQ…LLEP and CPQD…ESLR. The residue at position 457 (S457) is a Phosphoserine. At T471 the chain carries Phosphothreonine. Phosphoserine occurs at positions 475 and 506. Phosphoserine is present on residues S699 and S706. A helical; Anchor for type IV membrane protein transmembrane segment spans residues 724–744; sequence LVVMVILLNIGVAILFINFFI.

This sequence belongs to the junctophilin family. Specifically expressed in brain. Highest levels in the olfactory tubercle, caudate putamen, nucleus accumbens, hippocampal formation, piriform cortex and cerebellar cortex. Expressed in disctete neurons sites. In hippocampal formation, expressed in dendrites of hippocampal pyramidal and denate granule cells. In cerebellum, it is highly expressed in Purkinge cells, while it is weakly expressed in granular cells.

The protein localises to the cell membrane. Its subcellular location is the endoplasmic reticulum membrane. Junctophilins contribute to the formation of junctional membrane complexes (JMCs) which link the plasma membrane with the endoplasmic or sarcoplasmic reticulum in excitable cells. Provides a structural foundation for functional cross-talk between the cell surface and intracellular calcium release channels. JPH3 is brain-specific and appears to have an active role in certain neurons involved in motor coordination and memory. The sequence is that of Junctophilin-3 (Jph3) from Mus musculus (Mouse).